Here is a 287-residue protein sequence, read N- to C-terminus: Ribosomal RNA small subunit methyltransferase A (287 aa).

Asparagine 28, leucine 30, glycine 55, glutamate 76, aspartate 101, and asparagine 125 together coordinate S-adenosyl-L-methionine.

The protein belongs to the class I-like SAM-binding methyltransferase superfamily. rRNA adenine N(6)-methyltransferase family. RsmA subfamily.

The protein resides in the cytoplasm. It carries out the reaction adenosine(1518)/adenosine(1519) in 16S rRNA + 4 S-adenosyl-L-methionine = N(6)-dimethyladenosine(1518)/N(6)-dimethyladenosine(1519) in 16S rRNA + 4 S-adenosyl-L-homocysteine + 4 H(+). Its function is as follows. Specifically dimethylates two adjacent adenosines (A1518 and A1519) in the loop of a conserved hairpin near the 3'-end of 16S rRNA in the 30S particle. May play a critical role in biogenesis of 30S subunits. This chain is Ribosomal RNA small subunit methyltransferase A, found in Alkaliphilus metalliredigens (strain QYMF).